Here is a 324-residue protein sequence, read N- to C-terminus: Alkanal monooxygenase beta chain (324 aa).

It belongs to the bacterial luciferase oxidoreductase family. In terms of assembly, heterodimer of an alpha and a beta chain.

The catalysed reaction is a long-chain fatty aldehyde + FMNH2 + O2 = a long-chain fatty acid + hnu + FMN + H2O + 2 H(+). In terms of biological role, light-emitting reaction in luminous bacteria. The specific role of the beta subunit is unknown, but it is absolutely required for bioluminescence activity. In Photorhabdus luminescens (Xenorhabdus luminescens), this protein is Alkanal monooxygenase beta chain (luxB).